Here is a 62-residue protein sequence, read N- to C-terminus: UPF0434 protein Rpic_2808 (62 aa).

The protein belongs to the UPF0434 family.

This chain is UPF0434 protein Rpic_2808, found in Ralstonia pickettii (strain 12J).